The following is a 441-amino-acid chain: Methylenetetrahydrofolate--tRNA-(uracil-5-)-methyltransferase TrmFO (441 aa).

10–15 (GAGLAG) contacts FAD.

The protein belongs to the MnmG family. TrmFO subfamily. The cofactor is FAD.

The protein resides in the cytoplasm. The enzyme catalyses uridine(54) in tRNA + (6R)-5,10-methylene-5,6,7,8-tetrahydrofolate + NADH + H(+) = 5-methyluridine(54) in tRNA + (6S)-5,6,7,8-tetrahydrofolate + NAD(+). It carries out the reaction uridine(54) in tRNA + (6R)-5,10-methylene-5,6,7,8-tetrahydrofolate + NADPH + H(+) = 5-methyluridine(54) in tRNA + (6S)-5,6,7,8-tetrahydrofolate + NADP(+). In terms of biological role, catalyzes the folate-dependent formation of 5-methyl-uridine at position 54 (M-5-U54) in all tRNAs. In Desulforamulus reducens (strain ATCC BAA-1160 / DSM 100696 / MI-1) (Desulfotomaculum reducens), this protein is Methylenetetrahydrofolate--tRNA-(uracil-5-)-methyltransferase TrmFO.